A 132-amino-acid polypeptide reads, in one-letter code: MKTIHVSVVTPDGPVYEDDVEMVSVKAKSGELGILPGHIPLVAPLEISAARLKKGGKTQYIAFSGGFLEVRPDNVTILAQAAERAEDIDVLRAKARKSGRTPLQSQQDDIDFKRAELALKRAMNRLSVAEMK.

It belongs to the ATPase epsilon chain family. As to quaternary structure, F-type ATPases have 2 components, CF(1) - the catalytic core - and CF(0) - the membrane proton channel. CF(1) has five subunits: alpha(3), beta(3), gamma(1), delta(1), epsilon(1). CF(0) has three main subunits: a, b and c.

Its subcellular location is the cell membrane. Its function is as follows. Produces ATP from ADP in the presence of a proton gradient across the membrane. The chain is ATP synthase epsilon chain (atpC) from Geobacillus stearothermophilus (Bacillus stearothermophilus).